Here is a 444-residue protein sequence, read N- to C-terminus: tRNA modification GTPase MnmE (444 aa).

Positions 22, 79, and 118 each coordinate (6S)-5-formyl-5,6,7,8-tetrahydrofolate. In terms of domain architecture, TrmE-type G spans 214–368; sequence GMQVVLAGPP…LRDHLKSVMG (155 aa). Residue N224 coordinates K(+). GTP contacts are provided by residues 224-229, 243-249, and 268-271; these read NAGKSS, TEVPGTT, and DTAG. Residue S228 participates in Mg(2+) binding. 3 residues coordinate K(+): T243, V245, and T248. T249 is a Mg(2+) binding site. K444 is a binding site for (6S)-5-formyl-5,6,7,8-tetrahydrofolate.

The protein belongs to the TRAFAC class TrmE-Era-EngA-EngB-Septin-like GTPase superfamily. TrmE GTPase family. In terms of assembly, homodimer. Heterotetramer of two MnmE and two MnmG subunits. It depends on K(+) as a cofactor.

Its subcellular location is the cytoplasm. Its function is as follows. Exhibits a very high intrinsic GTPase hydrolysis rate. Involved in the addition of a carboxymethylaminomethyl (cmnm) group at the wobble position (U34) of certain tRNAs, forming tRNA-cmnm(5)s(2)U34. The sequence is that of tRNA modification GTPase MnmE from Alkalilimnicola ehrlichii (strain ATCC BAA-1101 / DSM 17681 / MLHE-1).